A 386-amino-acid chain; its full sequence is Patatin-07 (386 aa).

The N-terminal stretch at 1 to 23 is a signal peptide; that stretch reads MATTKSFLILFFMILATTSSTCA. The PNPLA domain occupies 32-229; sequence LSIDGGGIKG…TVADPALLSV (198 aa). Positions 36–41 match the GXGXXG motif; the sequence is GGGIKG. The GXSXG signature appears at 75 to 79; that stretch reads GTSTG. S77 acts as the Nucleophile in catalysis. N-linked (GlcNAc...) asparagine glycosylation is found at N115 and N202. D215 serves as the catalytic Proton acceptor. Residues 215–217 carry the DGA/G motif; sequence DGA.

Belongs to the patatin family. Tuber.

The protein localises to the vacuole. Its function is as follows. Probable lipolytic acyl hydrolase (LAH), an activity which is thought to be involved in the response of tubers to pathogens. This chain is Patatin-07, found in Solanum tuberosum (Potato).